The primary structure comprises 210 residues: Type III pantothenate kinase (210 aa).

5-12 (DIGNTYLH) serves as a coordination point for ATP. Residues Tyr-69 and 73–76 (GVDR) contribute to the substrate site. The Proton acceptor role is filled by Asp-75. Asp-90 contacts K(+). Ser-93 serves as a coordination point for ATP. Thr-145 contacts substrate.

This sequence belongs to the type III pantothenate kinase family. As to quaternary structure, homodimer. NH4(+) serves as cofactor. It depends on K(+) as a cofactor.

Its subcellular location is the cytoplasm. It catalyses the reaction (R)-pantothenate + ATP = (R)-4'-phosphopantothenate + ADP + H(+). Its pathway is cofactor biosynthesis; coenzyme A biosynthesis; CoA from (R)-pantothenate: step 1/5. Its function is as follows. Catalyzes the phosphorylation of pantothenate (Pan), the first step in CoA biosynthesis. This chain is Type III pantothenate kinase, found in Wolinella succinogenes (strain ATCC 29543 / DSM 1740 / CCUG 13145 / JCM 31913 / LMG 7466 / NCTC 11488 / FDC 602W) (Vibrio succinogenes).